A 554-amino-acid chain; its full sequence is ATP synthase subunit alpha (554 aa).

173-180 (GDRQTGKT) is an ATP binding site. The interval 531 to 554 (SHLAAEKVRKHVPPSKPTTQRTAG) is disordered.

This sequence belongs to the ATPase alpha/beta chains family. In terms of assembly, F-type ATPases have 2 components, CF(1) - the catalytic core - and CF(0) - the membrane proton channel. CF(1) has five subunits: alpha(3), beta(3), gamma(1), delta(1), epsilon(1). CF(0) has three main subunits: a(1), b(2) and c(9-12). The alpha and beta chains form an alternating ring which encloses part of the gamma chain. CF(1) is attached to CF(0) by a central stalk formed by the gamma and epsilon chains, while a peripheral stalk is formed by the delta and b chains.

The protein localises to the cell membrane. It catalyses the reaction ATP + H2O + 4 H(+)(in) = ADP + phosphate + 5 H(+)(out). Its function is as follows. Produces ATP from ADP in the presence of a proton gradient across the membrane. The alpha chain is a regulatory subunit. This chain is ATP synthase subunit alpha, found in Acidothermus cellulolyticus (strain ATCC 43068 / DSM 8971 / 11B).